The sequence spans 94 residues: Large ribosomal subunit protein bL25 (94 aa).

Belongs to the bacterial ribosomal protein bL25 family. As to quaternary structure, part of the 50S ribosomal subunit; part of the 5S rRNA/L5/L18/L25 subcomplex. Contacts the 5S rRNA. Binds to the 5S rRNA independently of L5 and L18.

Its function is as follows. This is one of the proteins that binds to the 5S RNA in the ribosome where it forms part of the central protuberance. The chain is Large ribosomal subunit protein bL25 from Escherichia coli O6:K15:H31 (strain 536 / UPEC).